Here is a 746-residue protein sequence, read N- to C-terminus: tRNA(Met) cytidine acetyltransferase TmcA (746 aa).

The tract at residues 181–200 is disordered; that stretch reads ARAETGGNPPSPGDSACRTE. ATP is bound by residues glutamine 202, 228–237, and arginine 370; that span reads GRGKSAALGI. Positions 405–617 constitute an N-acetyltransferase domain; the sequence is VAVERLDRDA…VHLPHQLADP (213 aa). Acetyl-CoA-binding positions include 517-519, 524-530, glutamate 557, and arginine 564; these read IAV and QGQGLGT.

It belongs to the RNA cytidine acetyltransferase family. TmcA subfamily.

The protein resides in the cytoplasm. It carries out the reaction cytidine(34) in elongator tRNA(Met) + acetyl-CoA + ATP + H2O = N(4)-acetylcytidine(34) in elongator tRNA(Met) + ADP + phosphate + CoA + H(+). In terms of biological role, catalyzes the formation of N(4)-acetylcytidine (ac(4)C) at the wobble position of tRNA(Met), by using acetyl-CoA as an acetyl donor and ATP (or GTP). This chain is tRNA(Met) cytidine acetyltransferase TmcA, found in Nitrosococcus halophilus (strain Nc4).